We begin with the raw amino-acid sequence, 170 residues long: Lipoprotein signal peptidase (170 aa).

Helical transmembrane passes span 13–33 (IFISILVFFDQWSKYLVVTYV), 72–92 (LFFLIIPIIILVFVFSFSLKE), 96–113 (VSRFALILILSGGIGNII), 116–136 (LFRPLGVVDFLDVKFFGIFGL), and 142–162 (FNFADSYVVVGMIVFIIYDLF). Active-site residues include D124 and D146.

Belongs to the peptidase A8 family.

Its subcellular location is the cell inner membrane. It catalyses the reaction Release of signal peptides from bacterial membrane prolipoproteins. Hydrolyzes -Xaa-Yaa-Zaa-|-(S,diacylglyceryl)Cys-, in which Xaa is hydrophobic (preferably Leu), and Yaa (Ala or Ser) and Zaa (Gly or Ala) have small, neutral side chains.. It participates in protein modification; lipoprotein biosynthesis (signal peptide cleavage). This protein specifically catalyzes the removal of signal peptides from prolipoproteins. The protein is Lipoprotein signal peptidase of Borrelia duttonii (strain Ly).